The primary structure comprises 142 residues: Large ribosomal subunit protein uL24 (142 aa).

The span at 1–11 (MKVNPFVSSDS) shows a compositional bias: polar residues. The interval 1 to 24 (MKVNPFVSSDSGKSRKAHFNAPSH) is disordered.

It belongs to the universal ribosomal protein uL24 family.

This is Large ribosomal subunit protein uL24 (rpl-26) from Caenorhabditis elegans.